Reading from the N-terminus, the 238-residue chain is Ribonuclease PH (238 aa).

Phosphate contacts are provided by residues Arg-86 and 124–126 (GTR).

Belongs to the RNase PH family. As to quaternary structure, homohexameric ring arranged as a trimer of dimers.

It catalyses the reaction tRNA(n+1) + phosphate = tRNA(n) + a ribonucleoside 5'-diphosphate. Functionally, phosphorolytic 3'-5' exoribonuclease that plays an important role in tRNA 3'-end maturation. Removes nucleotide residues following the 3'-CCA terminus of tRNAs; can also add nucleotides to the ends of RNA molecules by using nucleoside diphosphates as substrates, but this may not be physiologically important. Probably plays a role in initiation of 16S rRNA degradation (leading to ribosome degradation) during starvation. In Shigella flexneri serotype 5b (strain 8401), this protein is Ribonuclease PH.